The primary structure comprises 406 residues: Phosphopentomutase (406 aa).

Residues aspartate 10, aspartate 305, histidine 310, aspartate 346, histidine 347, and histidine 358 each coordinate Mn(2+).

The protein belongs to the phosphopentomutase family. Requires Mn(2+) as cofactor.

The protein localises to the cytoplasm. The catalysed reaction is 2-deoxy-alpha-D-ribose 1-phosphate = 2-deoxy-D-ribose 5-phosphate. The enzyme catalyses alpha-D-ribose 1-phosphate = D-ribose 5-phosphate. Its pathway is carbohydrate degradation; 2-deoxy-D-ribose 1-phosphate degradation; D-glyceraldehyde 3-phosphate and acetaldehyde from 2-deoxy-alpha-D-ribose 1-phosphate: step 1/2. Isomerase that catalyzes the conversion of deoxy-ribose 1-phosphate (dRib-1-P) and ribose 1-phosphate (Rib-1-P) to deoxy-ribose 5-phosphate (dRib-5-P) and ribose 5-phosphate (Rib-5-P), respectively. This chain is Phosphopentomutase, found in Vibrio campbellii (strain ATCC BAA-1116).